A 272-amino-acid polypeptide reads, in one-letter code: Phosphate import ATP-binding protein PstB (272 aa).

One can recognise an ABC transporter domain in the interval L26 to I267. Position 58–65 (G58–S65) interacts with ATP.

The protein belongs to the ABC transporter superfamily. Phosphate importer (TC 3.A.1.7) family. As to quaternary structure, the complex is composed of two ATP-binding proteins (PstB), two transmembrane proteins (PstC and PstA) and a solute-binding protein (PstS).

It is found in the cell inner membrane. It catalyses the reaction phosphate(out) + ATP + H2O = ADP + 2 phosphate(in) + H(+). Part of the ABC transporter complex PstSACB involved in phosphate import. Responsible for energy coupling to the transport system. In Shewanella denitrificans (strain OS217 / ATCC BAA-1090 / DSM 15013), this protein is Phosphate import ATP-binding protein PstB.